The sequence spans 146 residues: Hemoglobin subunit beta (146 aa).

Val1 bears the N-acetylvaline mark. The Globin domain maps to 2–146; the sequence is HLTAEEKSAV…VANALAHKYH (145 aa). Ser44 carries the phosphoserine modification. N6-acetyllysine is present on Lys59. His63 is a binding site for heme b. At Lys82 the chain carries N6-acetyllysine. His92 is a binding site for heme b. S-nitrosocysteine is present on Cys93. At Lys144 the chain carries N6-acetyllysine.

This sequence belongs to the globin family. Heterotetramer of two alpha chains and two beta chains. As to expression, red blood cells.

Functionally, involved in oxygen transport from the lung to the various peripheral tissues. The sequence is that of Hemoglobin subunit beta from Tamias merriami (Merriam's chipmunk).